Reading from the N-terminus, the 500-residue chain is L-arabinose isomerase (500 aa).

4 residues coordinate Mn(2+): Glu-306, Glu-333, His-349, and His-448.

This sequence belongs to the arabinose isomerase family. The cofactor is Mn(2+).

The enzyme catalyses beta-L-arabinopyranose = L-ribulose. It functions in the pathway carbohydrate degradation; L-arabinose degradation via L-ribulose; D-xylulose 5-phosphate from L-arabinose (bacterial route): step 1/3. Catalyzes the conversion of L-arabinose to L-ribulose. The polypeptide is L-arabinose isomerase (Cellvibrio japonicus (strain Ueda107) (Pseudomonas fluorescens subsp. cellulosa)).